Consider the following 64-residue polypeptide: MPKLKTNRGAVKRFKVTGSGKIKRAASNHNHILTKKSQKRKRRLRKIHEVAPSDMRAVSEMLRD.

The protein belongs to the bacterial ribosomal protein bL35 family.

The polypeptide is Large ribosomal subunit protein bL35 (Coxiella burnetii (strain RSA 493 / Nine Mile phase I)).